The following is a 273-amino-acid chain: Light-independent protochlorophyllide reductase iron-sulfur ATP-binding protein (273 aa).

ATP contacts are provided by residues Gly-12–Thr-17 and Lys-41. Ser-16 serves as a coordination point for Mg(2+). 2 residues coordinate [4Fe-4S] cluster: Cys-97 and Cys-131. Asn-182–Arg-183 provides a ligand contact to ATP.

This sequence belongs to the NifH/BchL/ChlL family. In terms of assembly, homodimer. Protochlorophyllide reductase is composed of three subunits; BchL, BchN and BchB. Requires [4Fe-4S] cluster as cofactor.

The catalysed reaction is chlorophyllide a + oxidized 2[4Fe-4S]-[ferredoxin] + 2 ADP + 2 phosphate = protochlorophyllide a + reduced 2[4Fe-4S]-[ferredoxin] + 2 ATP + 2 H2O. The protein operates within porphyrin-containing compound metabolism; bacteriochlorophyll biosynthesis (light-independent). Functionally, component of the dark-operative protochlorophyllide reductase (DPOR) that uses Mg-ATP and reduced ferredoxin to reduce ring D of protochlorophyllide (Pchlide) to form chlorophyllide a (Chlide). This reaction is light-independent. The L component serves as a unique electron donor to the NB-component of the complex, and binds Mg-ATP. The sequence is that of Light-independent protochlorophyllide reductase iron-sulfur ATP-binding protein from Roseiflexus sp. (strain RS-1).